The chain runs to 1807 residues: Integrin beta-4 (1807 aa).

The N-terminal stretch at 1-27 is a signal peptide; the sequence is MAGLCSSPWVKLLLAVVLSAGLPGNMA. The Extracellular portion of the chain corresponds to 28 to 713; that stretch reads NRCKKAQVKS…KKKDCLPAPS (686 aa). A PSI domain is found at 29–73; the sequence is RCKKAQVKSCTECIRVDKSCAYCTDELFKERRCNTQADVLAAGCR. 8 cysteine pairs are disulfide-bonded: Cys30–Cys48, Cys38–Cys456, Cys41–Cys61, Cys51–Cys72, Cys245–Cys288, Cys458–Cys477, Cys469–Cys480, and Cys482–Cys491. Residues 131–340 enclose the VWFA domain; it reads DLYILMDFSN…SYYEKLHKYF (210 aa). Residues Ser139 and Ser141 each contribute to the Mg(2+) site. The Ca(2+) site is built by Ser141, Asp144, Asp145, and Asp176. The involved in NRG1- and IGF1-binding stretch occupies residues 194 to 199; that stretch reads WPNSDP. Residues Asn228, Asp230, Pro232, and Glu233 each contribute to the Ca(2+) site. Glu233 provides a ligand contact to Mg(2+). Asn327 carries an N-linked (GlcNAc...) asparagine glycan. Glu350 serves as a coordination point for Ca(2+). I-EGF domains follow at residues 458-492, 493-538, 539-575, and 576-617; these read CELQKEVQSARCHYRGDFMCGHCVCNEGWSGKTCN, CSTG…HFCE, YDNFQCPRTSGFLCNDRGRCSMGECVCEPGWTGRSCD, and CPLS…TTCE. Asn492 carries N-linked (GlcNAc...) asparagine glycosylation. Intrachain disulfides connect Cys493–Cys521, Cys504–Cys519, Cys513–Cys524, Cys526–Cys537, Cys544–Cys558, Cys552–Cys563, Cys565–Cys574, Cys576–Cys599, Cys583–Cys597, Cys591–Cys602, and Cys604–Cys616. An N-linked (GlcNAc...) asparagine glycan is attached at Asn580. Asn619 is a glycosylation site (N-linked (GlcNAc...) asparagine). Intrachain disulfides connect Cys628/Cys673, Cys634/Cys653, Cys637/Cys650, and Cys682/Cys708. Residue Asn697 is glycosylated (N-linked (GlcNAc...) asparagine). Residues 714 to 734 form a helical membrane-spanning segment; that stretch reads WWLIPLLIFLLLLLVLLLLLC. The segment at 734-751 is palmitoylated on several cysteines; sequence CWKYCACCKACLGLLPCC. Residues 735–1807 lie on the Cytoplasmic side of the membrane; that stretch reads WKYCACCKAC…THMDQQFFQT (1073 aa). Ser773, Ser1071, and Ser1121 each carry phosphoserine. Positions 981-1086 constitute a Calx-beta domain; the sequence is VNITIIKEQA…QVRRFQVQLS (106 aa). Residues 1119 to 1141 are disordered; that stretch reads SASPPLPRGDLGAPQNPNAKAAG. Fibronectin type-III domains are found at residues 1131-1220 and 1224-1323; these read APQN…THQE and EPGR…TQPK. A phosphoserine mark is found at Ser1386, Ser1389, and Ser1405. Thr1418 is subject to Phosphothreonine. Ser1425 carries the post-translational modification Phosphoserine. Thr1514 is subject to Phosphothreonine. Fibronectin type-III domains follow at residues 1514–1609 and 1627–1723; these read TPTR…VHPQ and APGP…SQDG. Ser1776 carries the phosphoserine modification.

It belongs to the integrin beta chain family. In terms of assembly, heterodimer of an alpha and a beta subunit. Beta-4 associates with alpha-6. Interacts (via cytoplasmic region) with COL17A1 (via cytoplasmic region). Interacts (via cytoplasmic region) with DST isoform 3 (via N-terminus). Interacts (via cytoplasmic domain) with DST (via N-terminus). Interacts with RAC1. ITGA6:ITGB4 is found in a ternary complex with NRG1 and ERBB3. ITGA6:ITGB4 is found in a ternary complex with IGF1 and IGF1R. ITGA6:ITGB4 interacts with IGF2. Interacts with TMEM268; this interaction prevents ITGB4 degradation. Palmitoylated by DHHC3 at several cysteines of the membrane-proximal region, enhancing stability and cell surface expression. Palmitoylation also promotes secondary association with tertaspanins.

The protein resides in the cell membrane. It is found in the cell junction. Its subcellular location is the hemidesmosome. In terms of biological role, integrin alpha-6/beta-4 is a receptor for laminin. It plays a critical structural role in the hemidesmosome of epithelial cells. Is required for the regulation of keratinocyte polarity and motility. ITGA6:ITGB4 binds to NRG1 (via EGF domain) and this binding is essential for NRG1-ERBB signaling. ITGA6:ITGB4 binds to IGF1 and this binding is essential for IGF1 signaling. ITGA6:ITGB4 binds to IGF2 and this binding is essential for IGF2 signaling. The sequence is that of Integrin beta-4 (Itgb4) from Rattus norvegicus (Rat).